The primary structure comprises 184 residues: Oligoribonuclease (184 aa).

One can recognise an Exonuclease domain in the interval 9–172; that stretch reads LIWIDLEMTG…DDIRESIEEL (164 aa). The active site involves Y130.

This sequence belongs to the oligoribonuclease family.

It is found in the cytoplasm. 3'-to-5' exoribonuclease specific for small oligoribonucleotides. The chain is Oligoribonuclease from Actinobacillus pleuropneumoniae serotype 5b (strain L20).